The sequence spans 335 residues: Sphingomyelinase C (335 aa).

An N-terminal signal peptide occupies residues 1–28; that stretch reads MEKFKIIKTIPKICGAFIFLLFFTFLFG.

The protein belongs to the neutral sphingomyelinase family.

Its subcellular location is the secreted. The enzyme catalyses a sphingomyelin + H2O = phosphocholine + an N-acylsphing-4-enine + H(+). Virulence factor that promotes intracellular proliferation by mediating the disruption of the phagocytic vacuole and the release of bacteria into the host cell cytosol. May act in concert with the phospholipases PlcA and PlcB and the hemolysin hly to mediate efficient escape from the vacuole. In Listeria ivanovii, this protein is Sphingomyelinase C (smcL).